Here is a 920-residue protein sequence, read N- to C-terminus: Isoleucine--tRNA ligase (920 aa).

The 'HIGH' region signature appears at 58–68 (PYANGHLHLGH). E569 serves as a coordination point for L-isoleucyl-5'-AMP. Positions 610–614 (KMSKS) match the 'KMSKS' region motif. Residue K613 coordinates ATP. The Zn(2+) site is built by C895, C898, C910, and C913.

This sequence belongs to the class-I aminoacyl-tRNA synthetase family. IleS type 1 subfamily. In terms of assembly, monomer. Zn(2+) serves as cofactor.

Its subcellular location is the cytoplasm. It carries out the reaction tRNA(Ile) + L-isoleucine + ATP = L-isoleucyl-tRNA(Ile) + AMP + diphosphate. Its function is as follows. Catalyzes the attachment of isoleucine to tRNA(Ile). As IleRS can inadvertently accommodate and process structurally similar amino acids such as valine, to avoid such errors it has two additional distinct tRNA(Ile)-dependent editing activities. One activity is designated as 'pretransfer' editing and involves the hydrolysis of activated Val-AMP. The other activity is designated 'posttransfer' editing and involves deacylation of mischarged Val-tRNA(Ile). The protein is Isoleucine--tRNA ligase of Helicobacter pylori (strain Shi470).